The following is a 200-amino-acid chain: 3-isopropylmalate dehydratase small subunit 2 (200 aa).

The protein belongs to the LeuD family. LeuD type 1 subfamily. Heterodimer of LeuC and LeuD.

It catalyses the reaction (2R,3S)-3-isopropylmalate = (2S)-2-isopropylmalate. The protein operates within amino-acid biosynthesis; L-leucine biosynthesis; L-leucine from 3-methyl-2-oxobutanoate: step 2/4. Catalyzes the isomerization between 2-isopropylmalate and 3-isopropylmalate, via the formation of 2-isopropylmaleate. In Mannheimia succiniciproducens (strain KCTC 0769BP / MBEL55E), this protein is 3-isopropylmalate dehydratase small subunit 2.